We begin with the raw amino-acid sequence, 754 residues long: 5-methyltetrahydropteroyltriglutamate--homocysteine methyltransferase (754 aa).

5-methyltetrahydropteroyltri-L-glutamate contacts are provided by residues 17–20 (RELK) and Lys-117. Residues 431–433 (IGS) and Glu-484 each bind L-homocysteine. L-methionine is bound by residues 431 to 433 (IGS) and Glu-484. Residues 515-516 (RC) and Trp-561 each bind 5-methyltetrahydropteroyltri-L-glutamate. An L-homocysteine-binding site is contributed by Asp-599. Asp-599 is an L-methionine binding site. Glu-605 is a binding site for 5-methyltetrahydropteroyltri-L-glutamate. Zn(2+) is bound by residues His-641, Cys-643, and Glu-665. The Proton donor role is filled by His-694. Residue Cys-726 coordinates Zn(2+).

Belongs to the vitamin-B12 independent methionine synthase family. It depends on Zn(2+) as a cofactor.

The catalysed reaction is 5-methyltetrahydropteroyltri-L-glutamate + L-homocysteine = tetrahydropteroyltri-L-glutamate + L-methionine. The protein operates within amino-acid biosynthesis; L-methionine biosynthesis via de novo pathway; L-methionine from L-homocysteine (MetE route): step 1/1. Functionally, catalyzes the transfer of a methyl group from 5-methyltetrahydrofolate to homocysteine resulting in methionine formation. The polypeptide is 5-methyltetrahydropteroyltriglutamate--homocysteine methyltransferase (Salmonella paratyphi A (strain ATCC 9150 / SARB42)).